The following is a 509-amino-acid chain: Serine/threonine protein kinase OSK4 (509 aa).

The 253-residue stretch at 17 to 269 (YNLGRTLGIG…IREIREHQWF (253 aa)) folds into the Protein kinase domain. Residues 23–31 (LGIGSFGKV) and lysine 46 each bind ATP. The active-site Proton acceptor is aspartate 140. In terms of domain architecture, UBA spans 290–330 (MIDEDTLQDVVNLGYEKDHVCESLRNRLQNEATVAYYLLLD). The KA1 domain maps to 460-508 (NGRLPAVIKFEIQLYKSRDEKYLLDMQRVTGPQLLFLDFCAAFLTKLRV).

Belongs to the protein kinase superfamily. Ser/Thr protein kinase family. Interacts with HDR1. In terms of tissue distribution, strongly expressed in immature seeds. Mostly expressed in panicles, leaf sheaths and roots, and to a lower extent, in germinating seeds and leaf blades.

Its subcellular location is the nucleus. It carries out the reaction L-seryl-[protein] + ATP = O-phospho-L-seryl-[protein] + ADP + H(+). The catalysed reaction is L-threonyl-[protein] + ATP = O-phospho-L-threonyl-[protein] + ADP + H(+). Its function is as follows. Suppressor of flowering in long days (LD) via the that up-regulation of HD1 and the down-regulation of EHD1. Can phosphorylate HD1 in the presence of HDR1. The sequence is that of Serine/threonine protein kinase OSK4 from Oryza sativa subsp. indica (Rice).